We begin with the raw amino-acid sequence, 96 residues long: Co-chaperonin GroES (96 aa).

This sequence belongs to the GroES chaperonin family. In terms of assembly, heptamer of 7 subunits arranged in a ring. Interacts with the chaperonin GroEL.

The protein resides in the cytoplasm. Its function is as follows. Together with the chaperonin GroEL, plays an essential role in assisting protein folding. The GroEL-GroES system forms a nano-cage that allows encapsulation of the non-native substrate proteins and provides a physical environment optimized to promote and accelerate protein folding. GroES binds to the apical surface of the GroEL ring, thereby capping the opening of the GroEL channel. This is Co-chaperonin GroES from Photobacterium profundum (strain SS9).